The primary structure comprises 68 residues: MAVPQNRVTRSRRNMRRSHDALVAGNPNECSNCGELKRPHHVCPSCGHYADREVVAQANEVDLDEDAA.

The disordered stretch occupies residues 1 to 24; it reads MAVPQNRVTRSRRNMRRSHDALVA.

This sequence belongs to the bacterial ribosomal protein bL32 family.

This Paracoccus denitrificans (strain Pd 1222) protein is Large ribosomal subunit protein bL32.